Reading from the N-terminus, the 269-residue chain is MPELPEVEVTRLGITPHVLHQTVTDIVIRNGRLRWPIPDDINQIKQQPITKVRRRAKYLLLDTPVGSAIVHLGMSGSLRVLPAGTAPEKHDHVDLALSSGEILRYNDPRRFGAWLWQPVDTKHHVLAKLGPEPLTDVFTADYLQQKAKGKRTAIKQFIMDNHIVVGVGNIYANESLFSAGIHPQKAAGEVTPQALTVLVDEIKAVLAFAIQQGGTTLKDFKNADGKPGYFAQELQVYGKGGLPCPKCGTELAEVKIGQRATVYCSQCQQ.

Pro2 serves as the catalytic Schiff-base intermediate with DNA. Glu3 serves as the catalytic Proton donor. Lys57 acts as the Proton donor; for beta-elimination activity in catalysis. The DNA site is built by His90, Arg109, and Lys150. The segment at 235-269 (QVYGKGGLPCPKCGTELAEVKIGQRATVYCSQCQQ) adopts an FPG-type zinc-finger fold. Catalysis depends on Arg259, which acts as the Proton donor; for delta-elimination activity.

Belongs to the FPG family. As to quaternary structure, monomer. Zn(2+) is required as a cofactor.

The enzyme catalyses Hydrolysis of DNA containing ring-opened 7-methylguanine residues, releasing 2,6-diamino-4-hydroxy-5-(N-methyl)formamidopyrimidine.. It catalyses the reaction 2'-deoxyribonucleotide-(2'-deoxyribose 5'-phosphate)-2'-deoxyribonucleotide-DNA = a 3'-end 2'-deoxyribonucleotide-(2,3-dehydro-2,3-deoxyribose 5'-phosphate)-DNA + a 5'-end 5'-phospho-2'-deoxyribonucleoside-DNA + H(+). In terms of biological role, involved in base excision repair of DNA damaged by oxidation or by mutagenic agents. Acts as a DNA glycosylase that recognizes and removes damaged bases. Has a preference for oxidized purines, such as 7,8-dihydro-8-oxoguanine (8-oxoG). Has AP (apurinic/apyrimidinic) lyase activity and introduces nicks in the DNA strand. Cleaves the DNA backbone by beta-delta elimination to generate a single-strand break at the site of the removed base with both 3'- and 5'-phosphates. The sequence is that of Formamidopyrimidine-DNA glycosylase from Photobacterium damsela subsp. piscicida (Pasteurella piscicida).